A 252-amino-acid polypeptide reads, in one-letter code: Hydroxyacylglutathione hydrolase (252 aa).

Residues His54, His56, Asp58, His59, His113, Asp132, and His170 each coordinate Zn(2+).

This sequence belongs to the metallo-beta-lactamase superfamily. Glyoxalase II family. Monomer. Zn(2+) is required as a cofactor.

It carries out the reaction an S-(2-hydroxyacyl)glutathione + H2O = a 2-hydroxy carboxylate + glutathione + H(+). The protein operates within secondary metabolite metabolism; methylglyoxal degradation; (R)-lactate from methylglyoxal: step 2/2. Thiolesterase that catalyzes the hydrolysis of S-D-lactoyl-glutathione to form glutathione and D-lactic acid. The chain is Hydroxyacylglutathione hydrolase from Synechococcus sp. (strain JA-3-3Ab) (Cyanobacteria bacterium Yellowstone A-Prime).